A 238-amino-acid polypeptide reads, in one-letter code: ATP synthase subunit a (238 aa).

The next 7 membrane-spanning stretches (helical) occupy residues 35-55 (SNVIYAWFAMVLLIILGTLAT), 61-81 (VPSGLQNFFEVVVGGLESFVV), 94-114 (FLCALFLFIITGNLIGLVPGL), 128-148 (ALTVFAYYNFWGIRMWGAGYI), 151-171 (FMGPFWWLVPLMLPIEIISHL), 190-210 (IVLVLLFALAPVVGTFPMYFL), and 211-231 (FSLADCIQAFVFFMLAMIYLK).

It belongs to the ATPase A chain family. As to quaternary structure, F-type ATPases have 2 components, CF(1) - the catalytic core - and CF(0) - the membrane proton channel. CF(1) has five subunits: alpha(3), beta(3), gamma(1), delta(1), epsilon(1). CF(0) has three main subunits: a(1), b(2) and c(9-12). The alpha and beta chains form an alternating ring which encloses part of the gamma chain. CF(1) is attached to CF(0) by a central stalk formed by the gamma and epsilon chains, while a peripheral stalk is formed by the delta and b chains.

It is found in the cell inner membrane. Its function is as follows. Key component of the proton channel; it plays a direct role in the translocation of protons across the membrane. In Solidesulfovibrio magneticus (strain ATCC 700980 / DSM 13731 / RS-1) (Desulfovibrio magneticus), this protein is ATP synthase subunit a.